Here is a 509-residue protein sequence, read N- to C-terminus: Glycerol kinase (509 aa).

Thr-12 provides a ligand contact to ADP. Residues Thr-12, Thr-13, and Ser-14 each contribute to the ATP site. Thr-12 is a sn-glycerol 3-phosphate binding site. ADP is bound at residue Arg-16. The sn-glycerol 3-phosphate site is built by Arg-82, Glu-83, Tyr-134, and Asp-245. 5 residues coordinate glycerol: Arg-82, Glu-83, Tyr-134, Asp-245, and Gln-246. The ADP site is built by Thr-267 and Gly-311. ATP-binding residues include Thr-267, Gly-311, Gln-315, and Gly-412. ADP-binding residues include Gly-412 and Asn-416.

This sequence belongs to the FGGY kinase family.

It carries out the reaction glycerol + ATP = sn-glycerol 3-phosphate + ADP + H(+). It functions in the pathway polyol metabolism; glycerol degradation via glycerol kinase pathway; sn-glycerol 3-phosphate from glycerol: step 1/1. With respect to regulation, inhibited by fructose 1,6-bisphosphate (FBP). Its function is as follows. Key enzyme in the regulation of glycerol uptake and metabolism. Catalyzes the phosphorylation of glycerol to yield sn-glycerol 3-phosphate. The protein is Glycerol kinase of Rhizorhabdus wittichii (strain DSM 6014 / CCUG 31198 / JCM 15750 / NBRC 105917 / EY 4224 / RW1) (Sphingomonas wittichii).